The following is a 106-amino-acid chain: NADH dehydrogenase [ubiquinone] iron-sulfur protein 5 (106 aa).

A CHCH domain is found at 30–74; that stretch reads APRCHAFEKEWIECAHGIGAIRAEKECKIEYDDFIECLLRQKTMR. 2 short sequence motifs (cx9C motif) span residues 33 to 43 and 56 to 66; these read CHAFEKEWIEC and CKIEYDDFIEC. 2 disulfides stabilise this stretch: C33–C66 and C43–C56. The tract at residues 87-106 is disordered; it reads IKEGKYTPPPHHIGKGEPRP.

The protein belongs to the complex I NDUFS5 subunit family. In terms of assembly, mammalian complex I is composed of 45 different subunits. This is a component of the iron-sulfur (IP) fragment of the enzyme.

The protein resides in the mitochondrion inner membrane. It is found in the mitochondrion intermembrane space. Accessory subunit of the mitochondrial membrane respiratory chain NADH dehydrogenase (Complex I), that is believed not to be involved in catalysis. Complex I functions in the transfer of electrons from NADH to the respiratory chain. The immediate electron acceptor for the enzyme is believed to be ubiquinone. The polypeptide is NADH dehydrogenase [ubiquinone] iron-sulfur protein 5 (NDUFS5) (Macaca fascicularis (Crab-eating macaque)).